Reading from the N-terminus, the 124-residue chain is Ragulator complex protein LAMTOR2 homolog (124 aa).

It belongs to the GAMAD family. Part of the Ragulator complex.

Its function is as follows. Regulator of the TOR pathway, a signaling cascade that promotes cell growth in response to growth factors, energy levels, and amino acids. May activate the TOR signaling cascade in response to amino acids. This Caenorhabditis elegans protein is Ragulator complex protein LAMTOR2 homolog.